Reading from the N-terminus, the 91-residue chain is Small ribosomal subunit protein uS19 (91 aa).

It belongs to the universal ribosomal protein uS19 family.

In terms of biological role, protein S19 forms a complex with S13 that binds strongly to the 16S ribosomal RNA. The chain is Small ribosomal subunit protein uS19 from Bordetella petrii (strain ATCC BAA-461 / DSM 12804 / CCUG 43448).